Consider the following 553-residue polypeptide: Dihydroxy-acid dehydratase (553 aa).

Asp78 contacts Mg(2+). Cys119 is a [2Fe-2S] cluster binding site. Residues Asp120 and Lys121 each contribute to the Mg(2+) site. Lys121 carries the post-translational modification N6-carboxylysine. Position 193 (Cys193) interacts with [2Fe-2S] cluster. Glu441 is a binding site for Mg(2+). Catalysis depends on Ser467, which acts as the Proton acceptor.

This sequence belongs to the IlvD/Edd family. Homodimer. [2Fe-2S] cluster serves as cofactor. It depends on Mg(2+) as a cofactor.

The catalysed reaction is (2R)-2,3-dihydroxy-3-methylbutanoate = 3-methyl-2-oxobutanoate + H2O. It carries out the reaction (2R,3R)-2,3-dihydroxy-3-methylpentanoate = (S)-3-methyl-2-oxopentanoate + H2O. Its pathway is amino-acid biosynthesis; L-isoleucine biosynthesis; L-isoleucine from 2-oxobutanoate: step 3/4. It participates in amino-acid biosynthesis; L-valine biosynthesis; L-valine from pyruvate: step 3/4. Its function is as follows. Functions in the biosynthesis of branched-chain amino acids. Catalyzes the dehydration of (2R,3R)-2,3-dihydroxy-3-methylpentanoate (2,3-dihydroxy-3-methylvalerate) into 2-oxo-3-methylpentanoate (2-oxo-3-methylvalerate) and of (2R)-2,3-dihydroxy-3-methylbutanoate (2,3-dihydroxyisovalerate) into 2-oxo-3-methylbutanoate (2-oxoisovalerate), the penultimate precursor to L-isoleucine and L-valine, respectively. The sequence is that of Dihydroxy-acid dehydratase from Geotalea daltonii (strain DSM 22248 / JCM 15807 / FRC-32) (Geobacter daltonii).